A 379-amino-acid chain; its full sequence is Carbamoyl phosphate synthase small chain (379 aa).

The interval 1-187 is CPSase; sequence MNFTPALLAL…GSGHAPAPAS (187 aa). Ser48, Gly239, and Gly241 together coordinate L-glutamine. Residues 191–378 form the Glutamine amidotransferase type-1 domain; it reads KVVAYDFGVK…IELMKPQGVR (188 aa). Catalysis depends on Cys267, which acts as the Nucleophile. Leu268, Gln271, Asn309, Gly311, and Phe312 together coordinate L-glutamine. Catalysis depends on residues His351 and Glu353.

This sequence belongs to the CarA family. In terms of assembly, composed of two chains; the small (or glutamine) chain promotes the hydrolysis of glutamine to ammonia, which is used by the large (or ammonia) chain to synthesize carbamoyl phosphate. Tetramer of heterodimers (alpha,beta)4.

The enzyme catalyses hydrogencarbonate + L-glutamine + 2 ATP + H2O = carbamoyl phosphate + L-glutamate + 2 ADP + phosphate + 2 H(+). It carries out the reaction L-glutamine + H2O = L-glutamate + NH4(+). Its pathway is amino-acid biosynthesis; L-arginine biosynthesis; carbamoyl phosphate from bicarbonate: step 1/1. It functions in the pathway pyrimidine metabolism; UMP biosynthesis via de novo pathway; (S)-dihydroorotate from bicarbonate: step 1/3. Small subunit of the glutamine-dependent carbamoyl phosphate synthetase (CPSase). CPSase catalyzes the formation of carbamoyl phosphate from the ammonia moiety of glutamine, carbonate, and phosphate donated by ATP, constituting the first step of 2 biosynthetic pathways, one leading to arginine and/or urea and the other to pyrimidine nucleotides. The small subunit (glutamine amidotransferase) binds and cleaves glutamine to supply the large subunit with the substrate ammonia. The chain is Carbamoyl phosphate synthase small chain from Thioalkalivibrio sulfidiphilus (strain HL-EbGR7).